Reading from the N-terminus, the 343-residue chain is MIKVGIVGGSGYGAIELIRLLQTHPHVTIAHIYSHSKVDEPLKLTFPHLQHIMQHFEALTVDNNDCDVIFFATPAPVSKTCIPPLVEKGIHVIDLSGAFRIKNREIYEAYYKETAAAQDDLNHAIYSISEWQSLDNNGTKLISNPGCFPTATLLALHPLISEKIVDLSSIIIDAKTGVSGAGRSLSQRVHFSEMNENLSAYAIGNHKHKPEIEQYLSIIAGQDVSVIFTPHLVPMARGILSTIYVKLSSEYTTESLHKLMTSYYANQPFVRIRDIGTFPTTKEVLGSNYCDIGIYVDETTQTAILVSVIDNLVKGASGQAIQNLNILYDFEVTTGLKQSPVYP.

The active site involves Cys147.

Belongs to the NAGSA dehydrogenase family. Type 1 subfamily.

Its subcellular location is the cytoplasm. It catalyses the reaction N-acetyl-L-glutamate 5-semialdehyde + phosphate + NADP(+) = N-acetyl-L-glutamyl 5-phosphate + NADPH + H(+). It functions in the pathway amino-acid biosynthesis; L-arginine biosynthesis; N(2)-acetyl-L-ornithine from L-glutamate: step 3/4. Functionally, catalyzes the NADPH-dependent reduction of N-acetyl-5-glutamyl phosphate to yield N-acetyl-L-glutamate 5-semialdehyde. The chain is N-acetyl-gamma-glutamyl-phosphate reductase from Staphylococcus aureus (strain MRSA252).